The primary structure comprises 373 residues: 3 beta-hydroxysteroid dehydrogenase/Delta 5--&gt;4-isomerase type 1 (373 aa).

Residues 10–15 (GAGGFV), tyrosine 155, and lysine 159 each bind NADP(+). Lysine 159 serves as the catalytic Proton donor. A helical transmembrane segment spans residues 288-308 (LPLLYWLAFLLETVSFLLRPF).

This sequence belongs to the 3-beta-HSD family. As to expression, adrenal glands, kidney, testes and ovaries.

Its subcellular location is the endoplasmic reticulum membrane. It localises to the mitochondrion membrane. It carries out the reaction a 3beta-hydroxy-Delta(5)-steroid + NAD(+) = a 3-oxo-Delta(5)-steroid + NADH + H(+). The catalysed reaction is pregnenolone + NAD(+) = pregn-5-ene-3,20-dione + NADH + H(+). The enzyme catalyses 3beta-hydroxyandrost-5-en-17-one + NAD(+) = androst-5-ene-3,17-dione + NADH + H(+). It catalyses the reaction androst-5-en-3beta,17beta-diol + NAD(+) = 17beta-hydroxy-androst-5-en-3-one + NADH + H(+). It carries out the reaction a 3beta-hydroxysteroid + NADP(+) = a 3-oxosteroid + NADPH + H(+). The catalysed reaction is 5alpha-androstane-3beta,17beta-diol + NADP(+) = 17beta-hydroxy-5alpha-androstan-3-one + NADPH + H(+). The enzyme catalyses 3beta-hydroxy-5alpha-androstan-17-one + NADP(+) = 5alpha-androstan-3,17-dione + NADPH + H(+). It catalyses the reaction a 3-oxo-Delta(5)-steroid = a 3-oxo-Delta(4)-steroid. It carries out the reaction pregn-5-ene-3,20-dione = progesterone. The catalysed reaction is androst-5-ene-3,17-dione = androst-4-ene-3,17-dione. The enzyme catalyses 17beta-hydroxy-androst-5-en-3-one = testosterone. It catalyses the reaction 5alpha-androstane-3beta,17beta-diol + NAD(+) = 17beta-hydroxy-5alpha-androstan-3-one + NADH + H(+). It participates in steroid hormone biosynthesis. The protein operates within steroid metabolism. Its function is as follows. A bifunctional enzyme responsible for the oxidation and isomerization of 3beta-hydroxy-Delta(5)-steroid precursors to 3-oxo-Delta(4)-steroids, an essential step in steroid hormone biosynthesis. Specifically catalyzes the conversion of pregnenolone to progesterone, dehydroepiandrosterone (DHEA) to 4-androstenedione, and androstenediol to testosterone. Additionally, catalyzes the interconversion between 3beta-hydroxy and 3-oxo-5alpha-androstane steroids controlling the bioavalability of the active forms. Specifically converts dihydrotestosterone to its inactive form 5alpha-androstanediol, that does not bind androgen receptor/AR. Also converts androstanedione, a precursor of testosterone and estrone, to epiandrosterone. Expected to use NAD(+) as preferred electron donor for the 3beta-hydroxy-steroid dehydrogenase activity and NADPH for the 3-ketosteroid reductase activity. In Rattus norvegicus (Rat), this protein is 3 beta-hydroxysteroid dehydrogenase/Delta 5--&gt;4-isomerase type 1.